A 126-amino-acid polypeptide reads, in one-letter code: Fluoride-specific ion channel FluC (126 aa).

Transmembrane regions (helical) follow at residues 4–24 (PLLSIALGSVLGAWLRWFLGL), 33–53 (IPLGTVTVNLVGGFIIGFAMA), 67–87 (FVITGFCGALTTFSTFSIEIV), and 97–117 (MAMLAISIHLIGSLIFTCLGL). Positions 74 and 77 each coordinate Na(+).

This sequence belongs to the fluoride channel Fluc/FEX (TC 1.A.43) family.

It is found in the cell inner membrane. The enzyme catalyses fluoride(in) = fluoride(out). Na(+) is not transported, but it plays an essential structural role and its presence is essential for fluoride channel function. Its function is as follows. Fluoride-specific ion channel. Important for reducing fluoride concentration in the cell, thus reducing its toxicity. The protein is Fluoride-specific ion channel FluC of Acinetobacter baumannii (strain AB307-0294).